A 247-amino-acid chain; its full sequence is Ribonuclease PH (247 aa).

Residues arginine 87 and 125-127 (GTR) contribute to the phosphate site.

The protein belongs to the RNase PH family. Homohexameric ring arranged as a trimer of dimers.

The enzyme catalyses tRNA(n+1) + phosphate = tRNA(n) + a ribonucleoside 5'-diphosphate. Its function is as follows. Phosphorolytic 3'-5' exoribonuclease that plays an important role in tRNA 3'-end maturation. Removes nucleotide residues following the 3'-CCA terminus of tRNAs; can also add nucleotides to the ends of RNA molecules by using nucleoside diphosphates as substrates, but this may not be physiologically important. Probably plays a role in initiation of 16S rRNA degradation (leading to ribosome degradation) during starvation. The chain is Ribonuclease PH from Nostoc sp. (strain PCC 7120 / SAG 25.82 / UTEX 2576).